Reading from the N-terminus, the 851-residue chain is DNA mismatch repair protein MutS (851 aa).

Residue 614 to 621 coordinates ATP; sequence GPNMGGKS.

It belongs to the DNA mismatch repair MutS family.

Its function is as follows. This protein is involved in the repair of mismatches in DNA. It is possible that it carries out the mismatch recognition step. This protein has a weak ATPase activity. The sequence is that of DNA mismatch repair protein MutS from Yersinia pseudotuberculosis serotype O:1b (strain IP 31758).